The primary structure comprises 53 residues: UPF0391 membrane protein SG0393 (53 aa).

A run of 2 helical transmembrane segments spans residues 4–24 (WGII…GGLA) and 27–47 (AAWA…ISLF).

It belongs to the UPF0391 family.

Its subcellular location is the cell membrane. The polypeptide is UPF0391 membrane protein SG0393 (Sodalis glossinidius (strain morsitans)).